A 289-amino-acid polypeptide reads, in one-letter code: Phosphatidylserine decarboxylase proenzyme (289 aa).

Residues Asp-89, His-146, and Ser-252 each act as charge relay system; for autoendoproteolytic cleavage activity in the active site. Catalysis depends on Ser-252, which acts as the Schiff-base intermediate with substrate; via pyruvic acid; for decarboxylase activity. Position 252 is a pyruvic acid (Ser); by autocatalysis (Ser-252).

Belongs to the phosphatidylserine decarboxylase family. PSD-B subfamily. Prokaryotic type I sub-subfamily. In terms of assembly, heterodimer of a large membrane-associated beta subunit and a small pyruvoyl-containing alpha subunit. Requires pyruvate as cofactor. In terms of processing, is synthesized initially as an inactive proenzyme. Formation of the active enzyme involves a self-maturation process in which the active site pyruvoyl group is generated from an internal serine residue via an autocatalytic post-translational modification. Two non-identical subunits are generated from the proenzyme in this reaction, and the pyruvate is formed at the N-terminus of the alpha chain, which is derived from the carboxyl end of the proenzyme. The autoendoproteolytic cleavage occurs by a canonical serine protease mechanism, in which the side chain hydroxyl group of the serine supplies its oxygen atom to form the C-terminus of the beta chain, while the remainder of the serine residue undergoes an oxidative deamination to produce ammonia and the pyruvoyl prosthetic group on the alpha chain. During this reaction, the Ser that is part of the protease active site of the proenzyme becomes the pyruvoyl prosthetic group, which constitutes an essential element of the active site of the mature decarboxylase.

The protein localises to the cell membrane. The enzyme catalyses a 1,2-diacyl-sn-glycero-3-phospho-L-serine + H(+) = a 1,2-diacyl-sn-glycero-3-phosphoethanolamine + CO2. Its pathway is phospholipid metabolism; phosphatidylethanolamine biosynthesis; phosphatidylethanolamine from CDP-diacylglycerol: step 2/2. Its function is as follows. Catalyzes the formation of phosphatidylethanolamine (PtdEtn) from phosphatidylserine (PtdSer). The protein is Phosphatidylserine decarboxylase proenzyme of Shewanella putrefaciens (strain CN-32 / ATCC BAA-453).